A 1818-amino-acid polypeptide reads, in one-letter code: Nestin (1818 aa).

Residues 1-14 (WREKLEAEVQRQNL) form a coil 1B region. Positions 1 to 135 (WREKLEAEVQ…TLLEAENSRL (135 aa)) constitute an IF rod domain. Positions 15-17 (YQE) are linker 2. The coil 2B stretch occupies residues 18-135 (RVAHMESSLG…TLLEAENSRL (118 aa)). Residue S133 is modified to Phosphoserine. A tail region spans residues 136-1818 (QTPGRSSQAS…DRDSWSSGED (1683 aa)). A phosphothreonine mark is found at T137 and T160. Residue S180 is modified to Phosphoserine. At T210 the chain carries Phosphothreonine. 4 disordered regions span residues 266–309 (EEAG…GSSI), 336–355 (AQET…SQGP), 377–451 (HETP…SPEG), and 480–787 (AFKK…EEDQ). S288 is subject to Phosphoserine. Residues 292–303 (PVLEAKDGDSTE) are compositionally biased toward basic and acidic residues. A compositionally biased stretch (polar residues) spans 382 to 398 (KENCNSLRSVDENQGTL). A phosphoserine mark is found at S390 and S400. 2 stretches are compositionally biased toward basic and acidic residues: residues 400 to 427 (SPEE…EKGV) and 434 to 443 (LGKEDPRIED). Residue S448 is modified to Phosphoserine. Basic and acidic residues predominate over residues 495–508 (EIQRVERLIEKEGQ). S513 is modified (phosphoserine). Composition is skewed to basic and acidic residues over residues 521–536 (TDRP…LKPV) and 565–586 (TDRP…KEGQ). S591 is modified (phosphoserine). Basic and acidic residues-rich tracts occupy residues 599–614 (TDRP…LKPV), 643–664 (TDRP…KEGQ), and 711–732 (TDRP…KEGQ). Phosphoserine is present on S737. Positions 744-773 (ETYRLLEKENGEPLKPVEEEDQRVERLIEK) are enriched in basic and acidic residues. A phosphoserine mark is found at S803 and S824. The disordered stretch occupies residues 866-900 (ESLLKKGTQESLESHEDRNQETQDPQRFLEEEGQG). Residues 868–886 (LLKKGTQESLESHEDRNQE) show a composition bias toward basic and acidic residues. Phosphoserine is present on residues S915 and S957. The tract at residues 945–998 (SLLERESQDSGKSLEGQEAFRCLGKEDPESLQFPEVQDQEIQRSLQQETQQTLG) is disordered. Residues 986–997 (QRSLQQETQQTL) are compositionally biased toward polar residues. Residue K1043 forms a Glycyl lysine isopeptide (Lys-Gly) (interchain with G-Cter in SUMO1); alternate linkage. K1043 participates in a covalent cross-link: Glycyl lysine isopeptide (Lys-Gly) (interchain with G-Cter in SUMO2); alternate. A phosphoserine mark is found at S1052, S1063, S1073, S1123, S1134, S1162, and S1238. 2 disordered regions span residues 1134–1262 (SPEA…LEGQ) and 1334–1818 (HPSL…SGED). Composition is skewed to basic and acidic residues over residues 1342–1361 (VEAK…KEAG) and 1401–1416 (ASDH…RPSE). A compositionally biased stretch (acidic residues) spans 1490–1505 (QDWEESREESEADELG). 3 positions are modified to phosphoserine: S1495, S1499, and S1523. A compositionally biased stretch (acidic residues) spans 1570–1579 (LSSEEFEDLG). Residues S1614 and S1623 each carry the phosphoserine modification. Acidic residues predominate over residues 1616–1636 (GFADEEESGEEGEEEEHEDGT). Residues 1686 to 1697 (GLETESQDSAEP) are compositionally biased toward polar residues. 5 positions are modified to phosphoserine: S1698, S1700, S1791, S1814, and S1815. A compositionally biased stretch (low complexity) spans 1698–1708 (SGSEVSESVSS).

This sequence belongs to the intermediate filament family. As to quaternary structure, interacts with FHOD3. Forms homodimers and homotetramers in vitro. In mixtures with other intermediate filament proteins such as vimentin and alpha-internexin, preferentially forms heterodimers which can assemble to form intermediate filaments if nestin does not exceed 25%. Constitutively phosphorylated. This increases during mitosis when the cytoplasmic intermediate filament network is reorganized.

In terms of biological role, required for brain and eye development. Promotes the disassembly of phosphorylated vimentin intermediate filaments (IF) during mitosis and may play a role in the trafficking and distribution of IF proteins and other cellular factors to daughter cells during progenitor cell division. Required for survival, renewal and mitogen-stimulated proliferation of neural progenitor cells. The chain is Nestin from Mesocricetus auratus (Golden hamster).